A 464-amino-acid chain; its full sequence is MDSLLWATWVLCLLNLWGVALGHLHLECDFITQLRDDELACLQAAEGTNNSSMGCPGTWDGLLCWPPTGSGQWVSLPCPEFFSHFGSDPGAVKRDCTITGWSDPFPPYPVACPVPLELLTEEKSYFSTVKIIYTTGHSISIVALCVAIAILVALRRLHCPRNYIHTQLFATFILKASAVFLKDAAVFQGDSTDHCSMSTILCKVSVAVSHFATMTNFSWLLAEAVYLSCLLASTSPRSKPAFWWLVLAGWGLPVLCTGTWVGCKLAFEDTACWDLDDSSPYWWIIKGPIVLSVGVNFGLFLNIICILLRKLGPAQGGLHTRAQYCNYLLPWSCPLPQVPRERTDLGPSSHEITVQESGTRNCQLPWRLSKSTLLLIPLFGIHYIIFNFLPDSAGLGIRLPLELGLGSFQGFVVAVLYCFLNQEVRTEISRKWYGHDPELLPARRTCTEWTTPPRSRVKVLTSEC.

Positions 1–22 (MDSLLWATWVLCLLNLWGVALG) are cleaved as a signal peptide. Residues 23–130 (HLHLECDFIT…EEKSYFSTVK (108 aa)) are Extracellular-facing. Intrachain disulfides connect Cys41–Cys64, Cys55–Cys96, and Cys78–Cys112. The N-linked (GlcNAc...) asparagine glycan is linked to Asn50. A helical transmembrane segment spans residues 131-151 (IIYTTGHSISIVALCVAIAIL). Over 152-167 (VALRRLHCPRNYIHTQ) the chain is Cytoplasmic. The chain crosses the membrane as a helical span at residues 168-188 (LFATFILKASAVFLKDAAVFQ). Topologically, residues 189–210 (GDSTDHCSMSTILCKVSVAVSH) are extracellular. Residues 211–231 (FATMTNFSWLLAEAVYLSCLL) form a helical membrane-spanning segment. The Cytoplasmic segment spans residues 232-240 (ASTSPRSKP). The chain crosses the membrane as a helical span at residues 241-261 (AFWWLVLAGWGLPVLCTGTWV). At 262 to 283 (GCKLAFEDTACWDLDDSSPYWW) the chain is on the extracellular side. The helical transmembrane segment at 284–304 (IIKGPIVLSVGVNFGLFLNII) threads the bilayer. The Cytoplasmic portion of the chain corresponds to 305 to 372 (CILLRKLGPA…QLPWRLSKST (68 aa)). A helical transmembrane segment spans residues 373-393 (LLLIPLFGIHYIIFNFLPDSA). The Extracellular segment spans residues 394–398 (GLGIR). Residues 399 to 419 (LPLELGLGSFQGFVVAVLYCF) form a helical membrane-spanning segment. Residues 420-464 (LNQEVRTEISRKWYGHDPELLPARRTCTEWTTPPRSRVKVLTSEC) lie on the Cytoplasmic side of the membrane.

Belongs to the G-protein coupled receptor 2 family. In terms of tissue distribution, pituitary gland.

It localises to the cell membrane. In terms of biological role, receptor for GRF, coupled to G proteins which activate adenylyl cyclase. Stimulates somatotroph cell growth, growth hormone gene transcription and growth hormone secretion. This is Growth hormone-releasing hormone receptor (Ghrhr) from Rattus norvegicus (Rat).